The chain runs to 468 residues: Effector protein hopD2 (468 aa).

The span at 1–20 (MNPLQPIQHSITNSQMSGGQ) shows a compositional bias: polar residues. Residues 1–35 (MNPLQPIQHSITNSQMSGGQQLEAEGSQAHNSYSH) are disordered. The Tyrosine-protein phosphatase domain maps to 143–468 (DASSPPSAND…TQWRAKIALE (326 aa)). The active-site Phosphocysteine intermediate is cysteine 378.

Interacts with EFR and FLS2 (via the kinase and cytoplasmic domains).

It localises to the secreted. It carries out the reaction O-phospho-L-tyrosyl-[protein] + H2O = L-tyrosyl-[protein] + phosphate. Its activity is regulated as follows. Inhibited by sodium orthovanadate. In terms of biological role, effector showing tyrosine-phosphatase activity required for host defense suppression. Functions inside plant cells causing suppression of HR (hypersensitive response), PR1 gene expression and oxidative burst probably by interfering with a MAPK (mitogen-activated protein kinase) pathway. MAPK cascades are known to activate defense-related transcription factors. Inhibits plant pattern-recognition receptors (PRRs) activation. The sequence is that of Effector protein hopD2 (hopD2) from Pseudomonas syringae pv. tomato (strain ATCC BAA-871 / DC3000).